Reading from the N-terminus, the 304-residue chain is MSAKSKGNPSSSCPAEGPPAASKTKVKEQIKIIVEDLELVLGDLKDVAKELKEVVDQIDTLTSDLQLEDEMTDSSKTDTLNSSSSGTTASSLEKIKVQANAPLIKPPAHPSAILTVLRKPNPPPPPPRLTPVKCEDPKRVVPTANPVKTNGTLLRNGGLPGGPNKIPNGDICCIPNSNLDKAPVQLLMHRPEKDRCPQAGPRERVRFNEKVQYHGYCPDCDTRYNIKNREVHLHSEPVHPPGKIPHQGPPLPPTPHLPPFPLENGGMGISHSNSFPPIRPATVPPPTAPKPQKTILRKSTTTTV.

A compositionally biased stretch (polar residues) spans 1–13 (MSAKSKGNPSSSC). 4 disordered regions span residues 1 to 27 (MSAK…TKVK), 66 to 91 (QLED…TASS), 114 to 160 (LTVL…GGLP), and 239 to 304 (HPPG…TTTV). A coiled-coil region spans residues 33–70 (IVEDLELVLGDLKDVAKELKEVVDQIDTLTSDLQLEDE). Low complexity predominate over residues 77–91 (TDTLNSSSSGTTASS). Composition is skewed to pro residues over residues 120–129 (PNPPPPPPRL), 239–261 (HPPG…PPFP), and 277–289 (PIRP…PTAP).

Functionally, regulator of cell size that promotes cell size increase independently of mTOR and Hippo signaling pathways. Acts by stimulating the translation of specific mRNAs, including those encoding proteins affecting mitochondrial functions. Increases mitochondrial mass and respiration. The chain is Protein Largen (PRR16) from Homo sapiens (Human).